The following is a 425-amino-acid chain: Putative TRAP transporter large permease protein HI_1029 (425 aa).

The next 13 helical transmembrane spans lie at 3-23 (VIIF…VAFA), 24-44 (LLIC…QILA), 54-74 (FSLM…EGGL), 93-113 (LGFV…SAVA), 139-159 (LIGT…FIVF), 169-189 (KLFL…AILW), 217-237 (VWAL…IFTP), 241-261 (GVVA…ELPL), 275-295 (TAVV…ITVA), 312-332 (PTIL…VMDL), 334-354 (PTVL…GIDP), 355-375 (VYFG…PPVG), and 399-419 (YLGM…LILM).

The protein belongs to the TRAP transporter large permease family.

The protein resides in the cell inner membrane. In Haemophilus influenzae (strain ATCC 51907 / DSM 11121 / KW20 / Rd), this protein is Putative TRAP transporter large permease protein HI_1029.